The chain runs to 232 residues: Dysfunctional anti-sigma-K factor RskA (232 aa).

The Cytoplasmic segment spans residues 1-90; it reads MTEHTDFELL…EVRRQSRWRT (90 aa). Residues 91 to 111 form a helical membrane-spanning segment; it reads AAFASAAAIAVGLGAFDLGVL. Residues 112–232 are Extracellular-facing; the sequence is TRPSPPPTVA…GTILAELPLG (121 aa).

This sequence belongs to the anti-sigma-K factor family.

It is found in the cell membrane. Functionally, an anti-sigma factor for extracytoplasmic function (ECF) sigma factor SigK. ECF sigma factors are held in an inactive form by an anti-sigma factor until released by regulated intramembrane proteolysis (RIP). However, in M.bovis this protein is probably dysfunctional, due to at least 1 of the 2 naturally occurring polymorphisms in its gene, when compared to M.tuberculosis. This leads to an increased expression of SigK-regulated genes, such as mpb70 and mpb83. RIP occurs when an extracytoplasmic signal triggers a concerted proteolytic cascade to transmit information and elicit cellular responses. The membrane-spanning regulatory substrate protein is first cut extracytoplasmically (site-1 protease, S1P), then within the membrane itself (site-2 protease, S2P, Rip1), while cytoplasmic proteases finish degrading the regulatory protein, liberating the sigma factor. In Mycobacterium bovis (strain ATCC BAA-935 / AF2122/97), this protein is Dysfunctional anti-sigma-K factor RskA (rskA).